A 1939-amino-acid polypeptide reads, in one-letter code: Myosin-1 (1939 aa).

Positions 33-82 (DAKTSVFVVDPKESFVKATVQSREGGKVTAKTEAGATVTVKDDQVFPMNP) constitute a Myosin N-terminal SH3-like domain. Phosphothreonine occurs at positions 64 and 69. Positions 86–782 (DKIEDMAMMT…LLGLLEEMRD (697 aa)) constitute a Myosin motor domain. At lysine 130 the chain carries N6,N6,N6-trimethyllysine. An ATP-binding site is contributed by 179 to 186 (GESGAGKT). Tyrosine 389 is modified (phosphotyrosine). Threonine 419 bears the Phosphothreonine mark. A Phosphotyrosine modification is found at tyrosine 424. Positions 659–681 (LNKLMTNLRSTHPHFVRCIIPNE) are actin-binding. A Pros-methylhistidine modification is found at histidine 757. The tract at residues 761–775 (KFGHTKVFFKAGLLG) is actin-binding. In terms of domain architecture, IQ spans 785-814 (LAQLITRTQAMCRGFLARVEYQKMVERRES). A coiled-coil region spans residues 843–1939 (LLKSAETEKE…EVHTKIISEE (1097 aa)). Residues serine 1092, serine 1096, serine 1162, and serine 1237 each carry the phosphoserine modification. Phosphothreonine is present on threonine 1241. Residues serine 1243 and serine 1261 each carry the phosphoserine modification. A phosphothreonine mark is found at threonine 1265 and threonine 1286. Phosphoserine occurs at positions 1288, 1292, 1303, and 1306. Threonine 1467 carries the phosphothreonine modification. Serine 1474 is subject to Phosphoserine. Tyrosine 1492 is subject to Phosphotyrosine. The residue at position 1495 (serine 1495) is a Phosphoserine. Residue threonine 1501 is modified to Phosphothreonine. Serine 1514 carries the post-translational modification Phosphoserine. At threonine 1517 the chain carries Phosphothreonine. Phosphoserine is present on residues serine 1542, serine 1554, serine 1574, serine 1600, serine 1603, serine 1714, and serine 1726. Phosphothreonine is present on residues threonine 1730 and threonine 1736. Serine 1739 carries the post-translational modification Phosphoserine.

Belongs to the TRAFAC class myosin-kinesin ATPase superfamily. Myosin family. As to quaternary structure, muscle myosin is a hexameric protein that consists of 2 heavy chain subunits (MHC), 2 alkali light chain subunits (MLC) and 2 regulatory light chain subunits (MLC-2). Interacts with SLC26A5.

It is found in the cytoplasm. Its subcellular location is the myofibril. Required for normal hearing. It plays a role in cochlear amplification of auditory stimuli, likely through the positive regulation of prestin (SLC26A5) activity and outer hair cell (OHC) electromotility. This Homo sapiens (Human) protein is Myosin-1.